A 146-amino-acid polypeptide reads, in one-letter code: MLSSSAASCTSPNPDTDNPDKKVRWSSEKRRRASSTDSESKTHLDISKLPRSRRPSRLTVKYDRGHLQRWLEMEQWVDAQVQELFQGQADTSEPEIDLEALMELSTDEQRTQLEAILQDCPGNREPFISELLSQLKRLRRLSRPSK.

Residues 1–16 are compositionally biased toward polar residues; sequence MLSSSAASCTSPNPDT. The interval 1-57 is disordered; that stretch reads MLSSSAASCTSPNPDTDNPDKKVRWSSEKRRRASSTDSESKTHLDISKLPRSRRPSR. Basic and acidic residues-rich tracts occupy residues 18–28 and 38–48; these read NPDKKVRWSSE and SESKTHLDISK. An interaction with protein phosphatase 1 region spans residues 21–25; it reads KKVRW.

This sequence belongs to the PP1 inhibitor family. In terms of processing, phosphorylated on several residues.

It localises to the cytoplasm. Its function is as follows. Inhibitor of PPP1CA. Has inhibitory activity only when phosphorylated, creating a molecular switch for regulating the phosphorylation status of PPP1CA substrates and smooth muscle contraction. This Rattus norvegicus (Rat) protein is Protein phosphatase 1 regulatory subunit 14D (Ppp1r14d).